The following is a 466-amino-acid chain: 3-isopropylmalate dehydratase large subunit (466 aa).

3 residues coordinate [4Fe-4S] cluster: Cys347, Cys407, and Cys410.

The protein belongs to the aconitase/IPM isomerase family. LeuC type 1 subfamily. In terms of assembly, heterodimer of LeuC and LeuD. It depends on [4Fe-4S] cluster as a cofactor.

It carries out the reaction (2R,3S)-3-isopropylmalate = (2S)-2-isopropylmalate. The protein operates within amino-acid biosynthesis; L-leucine biosynthesis; L-leucine from 3-methyl-2-oxobutanoate: step 2/4. Functionally, catalyzes the isomerization between 2-isopropylmalate and 3-isopropylmalate, via the formation of 2-isopropylmaleate. In Shewanella loihica (strain ATCC BAA-1088 / PV-4), this protein is 3-isopropylmalate dehydratase large subunit.